Reading from the N-terminus, the 331-residue chain is Ferredoxin--NADP reductase (331 aa).

FAD-binding residues include glutamate 38, glutamine 46, tyrosine 51, alanine 91, leucine 125, aspartate 282, and serine 323.

It belongs to the ferredoxin--NADP reductase type 2 family. As to quaternary structure, homodimer. The cofactor is FAD.

It catalyses the reaction 2 reduced [2Fe-2S]-[ferredoxin] + NADP(+) + H(+) = 2 oxidized [2Fe-2S]-[ferredoxin] + NADPH. The protein is Ferredoxin--NADP reductase of Deinococcus geothermalis (strain DSM 11300 / CIP 105573 / AG-3a).